Reading from the N-terminus, the 1368-residue chain is DNA-directed RNA polymerase subunit beta (1368 aa).

The protein belongs to the RNA polymerase beta chain family. The RNAP catalytic core consists of 2 alpha, 1 beta, 1 beta' and 1 omega subunit. When a sigma factor is associated with the core the holoenzyme is formed, which can initiate transcription.

It carries out the reaction RNA(n) + a ribonucleoside 5'-triphosphate = RNA(n+1) + diphosphate. In terms of biological role, DNA-dependent RNA polymerase catalyzes the transcription of DNA into RNA using the four ribonucleoside triphosphates as substrates. The sequence is that of DNA-directed RNA polymerase subunit beta from Burkholderia mallei (strain SAVP1).